The following is a 368-amino-acid chain: Quinolinate synthase (368 aa).

His46 and Ser63 together coordinate iminosuccinate. Residue Cys110 coordinates [4Fe-4S] cluster. Iminosuccinate-binding positions include 141 to 143 (YVN) and Ser162. Cys230 provides a ligand contact to [4Fe-4S] cluster. Residues 256-258 (HPE) and Thr273 contribute to the iminosuccinate site. A [4Fe-4S] cluster-binding site is contributed by Cys320.

Belongs to the quinolinate synthase family. Type 3 subfamily. [4Fe-4S] cluster is required as a cofactor.

Its subcellular location is the cytoplasm. It carries out the reaction iminosuccinate + dihydroxyacetone phosphate = quinolinate + phosphate + 2 H2O + H(+). Its pathway is cofactor biosynthesis; NAD(+) biosynthesis; quinolinate from iminoaspartate: step 1/1. Catalyzes the condensation of iminoaspartate with dihydroxyacetone phosphate to form quinolinate. The sequence is that of Quinolinate synthase from Bacillus anthracis (strain A0248).